Here is a 122-residue protein sequence, read N- to C-terminus: T cell receptor gamma variable 9 (122 aa).

An N-terminal signal peptide occupies residues 1–20 (MLSLLHTSTLAVLGALCVYG). Residues 27 to 122 (PQISSTKTLS…ATYYCALWEV (96 aa)) enclose the Ig-like domain. Cys43 and Cys117 are oxidised to a cystine.

In terms of assembly, gamma-delta TR is a heterodimer composed of a gamma and delta chain; disulfide-linked. The gamma-delta TR is associated with the transmembrane signaling CD3 coreceptor proteins following the stoichiometry: a single gamma-delta TR heterodimer associates with one CD3D-CD3E heterodimer, one CD3G-CD3E heterodimer and one CD247 homodimer forming a stable octameric structure. Upon activation, gamma-delta TR complex associates with FCER1G to initiate intracellular signaling.

Its subcellular location is the cell membrane. Functionally, v region of the variable domain of T cell receptor (TR) gamma chain that participates in the antigen recognition. Gamma-delta TRs recognize a variety of self and foreign non-peptide antigens frequently expressed at the epithelial boundaries between the host and external environment, including endogenous lipids presented by MH-like protein CD1D and phosphoantigens presented by butyrophilin-like molecule BTN3A1. Upon antigen recognition induces rapid, innate-like immune responses involved in pathogen clearance and tissue repair. Binding of gamma-delta TR complex to antigen triggers phosphorylation of immunoreceptor tyrosine-based activation motifs (ITAMs) in the CD3 chains by the LCK and FYN kinases, allowing the recruitment, phosphorylation, and activation of ZAP70 that facilitates phosphorylation of the scaffolding proteins LCP2 and LAT. This lead to the formation of a supramolecular signalosome that recruits the phospholipase PLCG1, resulting in calcium mobilization and ERK activation, ultimately leading to T cell expansion and differentiation into effector cells. Gamma-delta TRs are produced through somatic rearrangement of a limited repertoire of variable (V), diversity (D), and joining (J) genes. The potential diversity of gamma-delta TRs is conferred by the unique ability to rearrange (D) genes in tandem and to utilize all three reading frames. The combinatorial diversity is considerably increased by the sequence exonuclease trimming and random nucleotide (N) region additions which occur during the V-(D)-J rearrangements. The chain is T cell receptor gamma variable 9 from Homo sapiens (Human).